The primary structure comprises 455 residues: Probable circularly permuted 1,3-beta-glucanase TOS1 (455 aa).

Residues 1–23 (MLQKLSMTALVGLFSSVVSLVNA) form the signal peptide. Positions 158–221 (TADSTNTVVG…SSSSSSNTNG (64 aa)) are disordered. Polar residues predominate over residues 172–189 (SSYTKDSTVLSSSAQAVE). Low complexity predominate over residues 190–219 (TSESQSSISSSKTTSSAAAASSSSSSSSNT). The N-linked (GlcNAc...) asparagine glycan is linked to N236. Positions 372–377 (EMDLFE) match the ExDxxE motif motif. An N-linked (GlcNAc...) asparagine glycan is attached at N417.

Belongs to the PGA52 family.

It localises to the secreted. Its subcellular location is the cell wall. It carries out the reaction Hydrolysis of (1-&gt;3)-beta-D-glucosidic linkages in (1-&gt;3)-beta-D-glucans.. In terms of biological role, probable circularly permuted 1,3-beta-glucanase involved in cell wall modification through beta-1,3-glucan network alterations such as increased branching or remodeling. The polypeptide is Probable circularly permuted 1,3-beta-glucanase TOS1 (Saccharomyces cerevisiae (strain ATCC 204508 / S288c) (Baker's yeast)).